Reading from the N-terminus, the 181-residue chain is Adenylate kinase (181 aa).

An ATP-binding site is contributed by 10–15 (GAGKGT). The NMP stretch occupies residues 30–59 (STGELFRRNIEEGTKLGVEAKRYLDAGDLV). AMP is bound by residues Thr-31, Arg-36, 57 to 59 (DLV), 85 to 88 (GYPR), and Gln-92. The interval 126–132 (GRGRADD) is LID. Arg-127 contacts ATP. Residues Arg-129 and Arg-140 each coordinate AMP. ATP is bound at residue Gly-166.

The protein belongs to the adenylate kinase family. In terms of assembly, monomer.

It is found in the cytoplasm. The enzyme catalyses AMP + ATP = 2 ADP. Its pathway is purine metabolism; AMP biosynthesis via salvage pathway; AMP from ADP: step 1/1. Catalyzes the reversible transfer of the terminal phosphate group between ATP and AMP. Plays an important role in cellular energy homeostasis and in adenine nucleotide metabolism. The polypeptide is Adenylate kinase (Mycobacterium tuberculosis (strain ATCC 25177 / H37Ra)).